A 410-amino-acid chain; its full sequence is 3-phosphoshikimate 1-carboxyvinyltransferase (410 aa).

3-phosphoshikimate contacts are provided by Lys27, Ser28, and Arg32. A phosphoenolpyruvate-binding site is contributed by Lys27. Phosphoenolpyruvate-binding residues include Gly91 and Arg119. The 3-phosphoshikimate site is built by Ser161, Ser162, Gln163, Asp297, Gln319, and Lys323. Gln163 contributes to the phosphoenolpyruvate binding site. Asp297 functions as the Proton acceptor in the catalytic mechanism. Phosphoenolpyruvate is bound by residues Arg327, Arg368, and Lys394.

This sequence belongs to the EPSP synthase family. As to quaternary structure, monomer.

The protein resides in the cytoplasm. The enzyme catalyses 3-phosphoshikimate + phosphoenolpyruvate = 5-O-(1-carboxyvinyl)-3-phosphoshikimate + phosphate. Its pathway is metabolic intermediate biosynthesis; chorismate biosynthesis. Functionally, catalyzes the transfer of the enolpyruvyl moiety of phosphoenolpyruvate (PEP) to the 5-hydroxyl of shikimate-3-phosphate (S3P) to produce enolpyruvyl shikimate-3-phosphate and inorganic phosphate. This Pyrococcus abyssi (strain GE5 / Orsay) protein is 3-phosphoshikimate 1-carboxyvinyltransferase.